Consider the following 329-residue polypeptide: MSVLEENRPFAQQLSNVYFTILSLFCFKLFVKISLAILSHFYIVKGNRKEAARIAAEFYGVTQGQGSWADRSPLHEAASQGRLLALRTLLSQGYNVNAVTLDHVTPLHEACLGDHVACARTLLEAGANVNAITIDGVTPLFNACSQGSPSCAELLLEYGAKAQLESCLPSPTHEAASKGHHECLDILISWGIDVDQEIPHLGTPLYVACMSQQFHCIWKLLYAGADVQKGKYWDTPLHAAAQQSSTEIVNLLLEFGADINAKNTELLRPIDVATSSSMVERILLQHEATPSSLYQLCRLCIRSYIGKPRLHLIPQLQLPTLLKNFLQYR.

6 ANK repeats span residues 69 to 98, 102 to 131, 135 to 164, 167 to 196, 200 to 229, and 232 to 261; these read ADRS…NVNA, DHVT…NVNA, DGVT…KAQL, CLPS…DVDQ, HLGT…DVQK, and YWDT…DINA. Positions 278-329 constitute an SOCS box domain; that stretch reads MVERILLQHEATPSSLYQLCRLCIRSYIGKPRLHLIPQLQLPTLLKNFLQYR.

It belongs to the ankyrin SOCS box (ASB) family.

It participates in protein modification; protein ubiquitination. In terms of biological role, may be a substrate-recognition component of a SCF-like ECS (Elongin-Cullin-SOCS-box protein) E3 ubiquitin-protein ligase complex which mediates the ubiquitination and subsequent proteasomal degradation of target proteins. May play a role in the initiation of arteriogenesis. This is Ankyrin repeat and SOCS box protein 5 (ASB5) from Homo sapiens (Human).